The chain runs to 197 residues: Phosphoheptose isomerase (197 aa).

One can recognise an SIS domain in the interval 34 to 196; that stretch reads MVQCLLGGNK…DRTLFPQDEQ (163 aa). A substrate-binding site is contributed by 49–51; sequence NGG. Zn(2+)-binding residues include His-58 and Glu-62. Residues Glu-62, 91–92, 117–119, Ser-122, and Gln-172 each bind substrate; these read ND and STS. Gln-172 and His-180 together coordinate Zn(2+).

It belongs to the SIS family. GmhA subfamily. In terms of assembly, homotetramer. It depends on Zn(2+) as a cofactor.

It localises to the cytoplasm. It carries out the reaction 2 D-sedoheptulose 7-phosphate = D-glycero-alpha-D-manno-heptose 7-phosphate + D-glycero-beta-D-manno-heptose 7-phosphate. The protein operates within carbohydrate biosynthesis; D-glycero-D-manno-heptose 7-phosphate biosynthesis; D-glycero-alpha-D-manno-heptose 7-phosphate and D-glycero-beta-D-manno-heptose 7-phosphate from sedoheptulose 7-phosphate: step 1/1. In terms of biological role, catalyzes the isomerization of sedoheptulose 7-phosphate in D-glycero-D-manno-heptose 7-phosphate. This chain is Phosphoheptose isomerase, found in Shewanella piezotolerans (strain WP3 / JCM 13877).